Reading from the N-terminus, the 524-residue chain is Leukotriene-B4 omega-hydroxylase 3 (524 aa).

Heme is bound by residues E328 and C468.

Belongs to the cytochrome P450 family. It depends on heme as a cofactor.

It localises to the endoplasmic reticulum membrane. The protein resides in the microsome membrane. It catalyses the reaction leukotriene B4 + reduced [NADPH--hemoprotein reductase] + O2 = 20-hydroxy-leukotriene B4 + oxidized [NADPH--hemoprotein reductase] + H2O + H(+). The protein operates within lipid metabolism; leukotriene B4 degradation. In terms of biological role, cytochromes P450 are a group of heme-thiolate monooxygenases. Catalyzes the omega-hydroxylation of LTB4. In Mus musculus (Mouse), this protein is Leukotriene-B4 omega-hydroxylase 3 (Cyp4f14).